The following is a 267-amino-acid chain: Zinc finger protein ZAT1 (267 aa).

Residues 5–27 form a C2H2-type 1 zinc finger; the sequence is HKCKLCWKSFANGRALGGHMRSH. 2 disordered regions span residues 34-99 and 181-204; these read PSQP…ADIK and SHKKKIAETDQLGSDELKKKKKKS. Basic and acidic residues predominate over residues 52–62; sequence QDRESETESSK. The span at 63-73 shows a compositional bias: basic residues; the sequence is KPSRKRSRLNR. The span at 83-97 shows a compositional bias: basic and acidic residues; sequence QSNEEGKSETARAAD. 2 consecutive C2H2-type zinc fingers follow at residues 160–182 and 209–231; these read FECETCEKVFKSYQALGGHRASH and HECPICAKVFTSGQALGGHKRSH.

The protein resides in the nucleus. In terms of biological role, probable transcription factor that may be involved in stress responses. This is Zinc finger protein ZAT1 (ZAT1) from Arabidopsis thaliana (Mouse-ear cress).